The primary structure comprises 982 residues: Filament-like plant protein 4 (982 aa).

Coiled-coil stretches lie at residues Asp-39–Glu-83 and Glu-125–Leu-291. Residues Asp-311 to Met-333 are disordered. A compositionally biased stretch (low complexity) spans Val-323–Met-333. The stretch at Asp-345 to Ala-401 forms a coiled coil. Positions Gln-423 to Ser-433 are enriched in polar residues. 2 disordered regions span residues Gln-423 to Lys-466 and Gln-687 to Cys-711. A coiled-coil region spans residues Glu-452–Glu-475. The segment covering Asn-457–Lys-466 has biased composition (basic and acidic residues). Polar residues predominate over residues Glu-693–Ser-705. The stretch at Ala-722–Leu-885 forms a coiled coil. Composition is skewed to polar residues over residues Thr-896–Leu-910 and Ala-918–Lys-943. Residues Thr-896–Lys-982 form a disordered region.

Belongs to the FPP family. Interacts with WPP/MAF proteins.

The sequence is that of Filament-like plant protein 4 (FPP4) from Arabidopsis thaliana (Mouse-ear cress).